The sequence spans 186 residues: Tumor necrosis factor alpha-induced protein 8-like protein 2 (186 aa).

Belongs to the TNFAIP8 family. TNFAIP8L2 subfamily.

In terms of biological role, acts as a negative regulator of innate and adaptive immunity by maintaining immune homeostasis. Negative regulator of Toll-like receptor and T-cell receptor function. Prevents hyperresponsiveness of the immune system and maintains immune homeostasis. Inhibits jun/ap1 and NF-kappa-B activation. Promotes Fas-induced apoptosis. The sequence is that of Tumor necrosis factor alpha-induced protein 8-like protein 2 (tnfaip8l2) from Xenopus tropicalis (Western clawed frog).